A 223-amino-acid chain; its full sequence is Thylakoid lumenal 15.0 kDa protein 2, chloroplastic (223 aa).

The protein resides in the plastid. It is found in the chloroplast thylakoid lumen. The protein is Thylakoid lumenal 15.0 kDa protein 2, chloroplastic of Arabidopsis thaliana (Mouse-ear cress).